Reading from the N-terminus, the 317-residue chain is WSCD family member AAEL009094 (317 aa).

A helical membrane pass occupies residues 8-28; sequence LFGLAGTILVYIGGILFLSFV. N-linked (GlcNAc...) asparagine glycans are attached at residues Asn-150, Asn-226, and Asn-232.

This sequence belongs to the WSCD family.

The protein resides in the membrane. In Aedes aegypti (Yellowfever mosquito), this protein is WSCD family member AAEL009094.